A 577-amino-acid chain; its full sequence is Arginine--tRNA ligase (577 aa).

The short motif at 122 to 132 is the 'HIGH' region element; that stretch reads PNVAKEMHVGH.

It belongs to the class-I aminoacyl-tRNA synthetase family. Monomer.

It localises to the cytoplasm. It catalyses the reaction tRNA(Arg) + L-arginine + ATP = L-arginyl-tRNA(Arg) + AMP + diphosphate. The sequence is that of Arginine--tRNA ligase (argS) from Salmonella typhimurium (strain SL1344).